A 159-amino-acid chain; its full sequence is Large ribosomal subunit protein uL15 (159 aa).

Basic and acidic residues predominate over residues 1–18; the sequence is MKLNEIRDNEGSSKDRIR. Positions 1-37 are disordered; the sequence is MKLNEIRDNEGSSKDRIRVGRGIGSGKGKTGGRGVKG. The segment covering 21-35 has biased composition (gly residues); sequence RGIGSGKGKTGGRGV.

The protein belongs to the universal ribosomal protein uL15 family. In terms of assembly, part of the 50S ribosomal subunit.

In terms of biological role, binds to the 23S rRNA. The chain is Large ribosomal subunit protein uL15 from Agrobacterium fabrum (strain C58 / ATCC 33970) (Agrobacterium tumefaciens (strain C58)).